Here is a 256-residue protein sequence, read N- to C-terminus: Ribosomal RNA large subunit methyltransferase E (256 aa).

Residues Gly-48, Trp-50, Asp-68, Asp-86, and Asp-111 each coordinate S-adenosyl-L-methionine. Lys-151 serves as the catalytic Proton acceptor. The TRAM domain maps to Pro-198 to Glu-256.

It belongs to the class I-like SAM-binding methyltransferase superfamily. RNA methyltransferase RlmE family.

Its subcellular location is the cytoplasm. It carries out the reaction uridine(2552) in 23S rRNA + S-adenosyl-L-methionine = 2'-O-methyluridine(2552) in 23S rRNA + S-adenosyl-L-homocysteine + H(+). In terms of biological role, specifically methylates the uridine in position 2552 of 23S rRNA at the 2'-O position of the ribose in the fully assembled 50S ribosomal subunit. In Haloquadratum walsbyi (strain DSM 16790 / HBSQ001), this protein is Ribosomal RNA large subunit methyltransferase E.